Consider the following 104-residue polypeptide: A-type ATP synthase subunit F (104 aa).

This sequence belongs to the V-ATPase F subunit family. As to quaternary structure, has multiple subunits with at least A(3), B(3), C, D, E, F, H, I and proteolipid K(x).

It localises to the cell membrane. Functionally, component of the A-type ATP synthase that produces ATP from ADP in the presence of a proton gradient across the membrane. This chain is A-type ATP synthase subunit F, found in Thermoplasma volcanium (strain ATCC 51530 / DSM 4299 / JCM 9571 / NBRC 15438 / GSS1).